A 24-amino-acid polypeptide reads, in one-letter code: Cytochrome c oxidase subunit 5A-2, mitochondrial (24 aa).

It belongs to the cytochrome c oxidase subunit 5A family. Component of the cytochrome c oxidase (complex IV, CIV), a multisubunit enzyme composed of 14 subunits. The complex is composed of a catalytic core of 3 subunits MT-CO1, MT-CO2 and MT-CO3, encoded in the mitochondrial DNA, and 11 supernumerary subunits COX4I, COX5A, COX5B, COX6A, COX6B, COX6C, COX7A, COX7B, COX7C, COX8 and NDUFA4, which are encoded in the nuclear genome. The complex exists as a monomer or a dimer and forms supercomplexes (SCs) in the inner mitochondrial membrane with NADH-ubiquinone oxidoreductase (complex I, CI) and ubiquinol-cytochrome c oxidoreductase (cytochrome b-c1 complex, complex III, CIII), resulting in different assemblies (supercomplex SCI(1)III(2)IV(1) and megacomplex MCI(2)III(2)IV(2)).

Its subcellular location is the mitochondrion inner membrane. It functions in the pathway energy metabolism; oxidative phosphorylation. Functionally, component of the cytochrome c oxidase, the last enzyme in the mitochondrial electron transport chain which drives oxidative phosphorylation. The respiratory chain contains 3 multisubunit complexes succinate dehydrogenase (complex II, CII), ubiquinol-cytochrome c oxidoreductase (cytochrome b-c1 complex, complex III, CIII) and cytochrome c oxidase (complex IV, CIV), that cooperate to transfer electrons derived from NADH and succinate to molecular oxygen, creating an electrochemical gradient over the inner membrane that drives transmembrane transport and the ATP synthase. Cytochrome c oxidase is the component of the respiratory chain that catalyzes the reduction of oxygen to water. Electrons originating from reduced cytochrome c in the intermembrane space (IMS) are transferred via the dinuclear copper A center (CU(A)) of subunit 2 and heme A of subunit 1 to the active site in subunit 1, a binuclear center (BNC) formed by heme A3 and copper B (CU(B)). The BNC reduces molecular oxygen to 2 water molecules using 4 electrons from cytochrome c in the IMS and 4 protons from the mitochondrial matrix. This Thunnus obesus (Bigeye tuna) protein is Cytochrome c oxidase subunit 5A-2, mitochondrial.